A 302-amino-acid polypeptide reads, in one-letter code: Nucleotide-binding protein STH186 (302 aa).

15–22 (GMSGAGKT) contacts ATP. 66 to 69 (DIRG) contacts GTP.

It belongs to the RapZ-like family.

In terms of biological role, displays ATPase and GTPase activities. The chain is Nucleotide-binding protein STH186 from Symbiobacterium thermophilum (strain DSM 24528 / JCM 14929 / IAM 14863 / T).